A 181-amino-acid polypeptide reads, in one-letter code: NAD(P)H-quinone oxidoreductase subunit 6, chloroplastic (181 aa).

Helical transmembrane passes span 10–30, 33–53, 62–82, 98–118, and 153–173; these read TLLF…VVLL, VIYS…LYLL, AQVL…IMLV, IISA…IFTT, and LFPF…AITI.

The protein belongs to the complex I subunit 6 family. NDH is composed of at least 16 different subunits, 5 of which are encoded in the nucleus.

It is found in the plastid. The protein resides in the chloroplast thylakoid membrane. The enzyme catalyses a plastoquinone + NADH + (n+1) H(+)(in) = a plastoquinol + NAD(+) + n H(+)(out). The catalysed reaction is a plastoquinone + NADPH + (n+1) H(+)(in) = a plastoquinol + NADP(+) + n H(+)(out). NDH shuttles electrons from NAD(P)H:plastoquinone, via FMN and iron-sulfur (Fe-S) centers, to quinones in the photosynthetic chain and possibly in a chloroplast respiratory chain. The immediate electron acceptor for the enzyme in this species is believed to be plastoquinone. Couples the redox reaction to proton translocation, and thus conserves the redox energy in a proton gradient. This is NAD(P)H-quinone oxidoreductase subunit 6, chloroplastic (ndhG) from Zygnema circumcarinatum (Green alga).